The following is a 312-amino-acid chain: tRNA uridine(34) hydroxylase (312 aa).

A Rhodanese domain is found at 130 to 225 (RGDEVVFFDG…YGEQFGNKGL (96 aa)). Cysteine 185 (cysteine persulfide intermediate) is an active-site residue.

The protein belongs to the TrhO family.

The enzyme catalyses uridine(34) in tRNA + AH2 + O2 = 5-hydroxyuridine(34) in tRNA + A + H2O. Functionally, catalyzes oxygen-dependent 5-hydroxyuridine (ho5U) modification at position 34 in tRNAs. The protein is tRNA uridine(34) hydroxylase of Corynebacterium glutamicum (strain R).